Here is a 192-residue protein sequence, read N- to C-terminus: MRPAAITTSQRPARRTRSLCRDLECALPDATYVLRGTKNLRDTVLEALESGAEVLFYVTEAKGNPARLHVIDLGEIPPRLRLSFWLGGVKLQRELFGNRVDLSGDLVITTSKRPVSGHMKVAESLSEVLGVEFVPRAGSLEDVLEEALADVLLVVEGHPRHLGTLTFYRRTEKVGPSLFYRDFRTKDERMKL.

The Brix domain maps to 2-191 (RPAAITTSQR…DFRTKDERMK (190 aa)).

Probably involved in the biogenesis of the ribosome. The chain is Probable Brix domain-containing ribosomal biogenesis protein from Methanopyrus kandleri (strain AV19 / DSM 6324 / JCM 9639 / NBRC 100938).